Here is a 202-residue protein sequence, read N- to C-terminus: Putative zinc finger protein ZK686.5 (202 aa).

The tract at residues 43-63 is disordered; that stretch reads RKNVDNTSTRKPYSYKDRKRK. 3 consecutive C2H2-type zinc fingers follow at residues 110-133, 138-160, and 169-192; these read TYCE…GKVH, IECH…MKTH, and VQCE…DVSH.

It is found in the nucleus. This chain is Putative zinc finger protein ZK686.5, found in Caenorhabditis elegans.